The following is a 253-amino-acid chain: Low affinity immunoglobulin gamma Fc region receptor III-A (253 aa).

The first 20 residues, 1-20, serve as a signal peptide directing secretion; sequence MGQPLPPVALLLLVSASSRA. The Extracellular portion of the chain corresponds to 21–207; it reads ADVPKALVLL…ISSSVLPWHQ (187 aa). Ig-like C2-type domains follow at residues 24–90 and 99–189; these read PKAL…YRCQ and PVQL…VTIT. 2 disulfides stabilise this stretch: cysteine 47/cysteine 89 and cysteine 128/cysteine 172. Asparagine 56, asparagine 63, asparagine 165, and asparagine 180 each carry an N-linked (GlcNAc...) asparagine glycan. A helical membrane pass occupies residues 208–226; that stretch reads IAFCLVMGLLLAADTGLYF. At 227–253 the chain is on the cytoplasmic side; sequence SVQRDLRSSQRARKEHTLGWSLGSQDK.

Forms a heterooligomeric complex with ITAM-containing signaling subunits FCER1G. Interacts (via transmembrane domain) with signaling subunits; this interaction is a prerequisite for receptor complex expression on the cell surface and intracellular signal transduction. Binds the Fc region of antigen-complexed IgG.

It localises to the cell membrane. Its function is as follows. Receptor for the invariable Fc fragment of immunoglobulin gamma (IgG). Optimally activated upon binding of clustered antigen-IgG complexes displayed on cell surfaces, triggers lysis of antibody-coated cells, a process known as antibody-dependent cellular cytotoxicity (ADCC). Does not bind free monomeric IgG, thus avoiding inappropriate effector cell activation in the absence of antigenic trigger. Mediates IgG effector functions on natural killer (NK) cells. Binds antigen-IgG complexes generated upon infection and triggers NK cell-dependent cytokine production and degranulation to limit viral load and propagation. Fc-binding subunit that associates with FCER1G adapter to form functional signaling complexes. Following the engagement of antigen-IgG complexes, triggers phosphorylation of immunoreceptor tyrosine-based activation motif (ITAM)-containing adapters with subsequent activation of phosphatidylinositol 3-kinase signaling and sustained elevation of intracellular calcium that ultimately drive NK cell activation. Mediates enhanced ADCC in response to afucosylated IgGs. This is Low affinity immunoglobulin gamma Fc region receptor III-A from Oryctolagus cuniculus (Rabbit).